We begin with the raw amino-acid sequence, 754 residues long: 5-methyltetrahydropteroyltriglutamate--homocysteine methyltransferase (754 aa).

Residues 17-20 and lysine 117 contribute to the 5-methyltetrahydropteroyltri-L-glutamate site; that span reads RELK. Residues 431 to 433 and glutamate 484 contribute to the L-homocysteine site; that span reads IGS. L-methionine is bound by residues 431-433 and glutamate 484; that span reads IGS. Residues 515-516 and tryptophan 561 each bind 5-methyltetrahydropteroyltri-L-glutamate; that span reads RC. Aspartate 599 provides a ligand contact to L-homocysteine. Aspartate 599 is an L-methionine binding site. Glutamate 605 serves as a coordination point for 5-methyltetrahydropteroyltri-L-glutamate. Zn(2+) is bound by residues histidine 641, cysteine 643, and glutamate 665. Residue histidine 694 is the Proton donor of the active site. Residue cysteine 726 participates in Zn(2+) binding.

Belongs to the vitamin-B12 independent methionine synthase family. Requires Zn(2+) as cofactor.

It carries out the reaction 5-methyltetrahydropteroyltri-L-glutamate + L-homocysteine = tetrahydropteroyltri-L-glutamate + L-methionine. Its pathway is amino-acid biosynthesis; L-methionine biosynthesis via de novo pathway; L-methionine from L-homocysteine (MetE route): step 1/1. Its function is as follows. Catalyzes the transfer of a methyl group from 5-methyltetrahydrofolate to homocysteine resulting in methionine formation. In Salmonella enteritidis PT4 (strain P125109), this protein is 5-methyltetrahydropteroyltriglutamate--homocysteine methyltransferase.